The chain runs to 314 residues: Aspartate carbamoyltransferase catalytic subunit (314 aa).

2 residues coordinate carbamoyl phosphate: R58 and T59. K86 is an L-aspartate binding site. Carbamoyl phosphate is bound by residues R108, H136, and Q139. Positions 169 and 223 each coordinate L-aspartate. Carbamoyl phosphate-binding residues include G264 and P265.

It belongs to the aspartate/ornithine carbamoyltransferase superfamily. ATCase family. As to quaternary structure, heterododecamer (2C3:3R2) of six catalytic PyrB chains organized as two trimers (C3), and six regulatory PyrI chains organized as three dimers (R2).

The enzyme catalyses carbamoyl phosphate + L-aspartate = N-carbamoyl-L-aspartate + phosphate + H(+). Its pathway is pyrimidine metabolism; UMP biosynthesis via de novo pathway; (S)-dihydroorotate from bicarbonate: step 2/3. Its function is as follows. Catalyzes the condensation of carbamoyl phosphate and aspartate to form carbamoyl aspartate and inorganic phosphate, the committed step in the de novo pyrimidine nucleotide biosynthesis pathway. The chain is Aspartate carbamoyltransferase catalytic subunit from Roseobacter denitrificans (strain ATCC 33942 / OCh 114) (Erythrobacter sp. (strain OCh 114)).